The following is a 246-amino-acid chain: MGTDAWDGKQAAPPRRARRWLRWLMAAPLLFAAASVLQVLILRVVDPPISSMMAGRYLEAWGEGDWSFSLHRQWRDYDKIAASLPISVVAAEDQQFPMHHGFDLQAIEKARDHNARGGRVRGASTISQQVAKNVFLWQGRSWVRKGLEAWYTVLIELFWPKQRILEMYLNVAEFGDGVYGAQAAAQQFWSKDAAGLSPSESARLAAVLPSPRRYDARRPGAFVQRRAGWIQRQARQLGGPAYLQAP.

The chain crosses the membrane as a helical span at residues Trp-20–Leu-42.

This sequence belongs to the glycosyltransferase 51 family.

The protein resides in the cell inner membrane. It carries out the reaction [GlcNAc-(1-&gt;4)-Mur2Ac(oyl-L-Ala-gamma-D-Glu-L-Lys-D-Ala-D-Ala)](n)-di-trans,octa-cis-undecaprenyl diphosphate + beta-D-GlcNAc-(1-&gt;4)-Mur2Ac(oyl-L-Ala-gamma-D-Glu-L-Lys-D-Ala-D-Ala)-di-trans,octa-cis-undecaprenyl diphosphate = [GlcNAc-(1-&gt;4)-Mur2Ac(oyl-L-Ala-gamma-D-Glu-L-Lys-D-Ala-D-Ala)](n+1)-di-trans,octa-cis-undecaprenyl diphosphate + di-trans,octa-cis-undecaprenyl diphosphate + H(+). Its pathway is cell wall biogenesis; peptidoglycan biosynthesis. Functionally, peptidoglycan polymerase that catalyzes glycan chain elongation from lipid-linked precursors. The polypeptide is Biosynthetic peptidoglycan transglycosylase (Xanthomonas axonopodis pv. citri (strain 306)).